The following is a 100-amino-acid chain: Aspartyl/glutamyl-tRNA(Asn/Gln) amidotransferase subunit C (100 aa).

The protein belongs to the GatC family. In terms of assembly, heterotrimer of A, B and C subunits.

The catalysed reaction is L-glutamyl-tRNA(Gln) + L-glutamine + ATP + H2O = L-glutaminyl-tRNA(Gln) + L-glutamate + ADP + phosphate + H(+). It carries out the reaction L-aspartyl-tRNA(Asn) + L-glutamine + ATP + H2O = L-asparaginyl-tRNA(Asn) + L-glutamate + ADP + phosphate + 2 H(+). Allows the formation of correctly charged Asn-tRNA(Asn) or Gln-tRNA(Gln) through the transamidation of misacylated Asp-tRNA(Asn) or Glu-tRNA(Gln) in organisms which lack either or both of asparaginyl-tRNA or glutaminyl-tRNA synthetases. The reaction takes place in the presence of glutamine and ATP through an activated phospho-Asp-tRNA(Asn) or phospho-Glu-tRNA(Gln). The sequence is that of Aspartyl/glutamyl-tRNA(Asn/Gln) amidotransferase subunit C from Rickettsia bellii (strain OSU 85-389).